A 621-amino-acid polypeptide reads, in one-letter code: Chaperone protein HscA homolog (621 aa).

The protein belongs to the heat shock protein 70 family.

In terms of biological role, chaperone involved in the maturation of iron-sulfur cluster-containing proteins. Has a low intrinsic ATPase activity which is markedly stimulated by HscB. The chain is Chaperone protein HscA homolog from Ralstonia pickettii (strain 12J).